An 885-amino-acid polypeptide reads, in one-letter code: Dual serine/threonine and tyrosine protein kinase (885 aa).

The region spanning 614–868 is the Protein kinase domain; sequence PKLGRELGRG…PLLGIVQPGL (255 aa). Residues 620 to 628 and lysine 643 contribute to the ATP site; that span reads LGRGQYGVV. Aspartate 739 acts as the Proton acceptor in catalysis.

Belongs to the protein kinase superfamily. Ser/Thr protein kinase family.

The protein localises to the cytoplasm. It is found in the cell membrane. Its subcellular location is the apical cell membrane. The protein resides in the basolateral cell membrane. It localises to the cell junction. The enzyme catalyses L-seryl-[protein] + ATP = O-phospho-L-seryl-[protein] + ADP + H(+). It carries out the reaction L-threonyl-[protein] + ATP = O-phospho-L-threonyl-[protein] + ADP + H(+). It catalyses the reaction L-tyrosyl-[protein] + ATP = O-phospho-L-tyrosyl-[protein] + ADP + H(+). Its function is as follows. May act as a positive regulator of ERK phosphorylation downstream of fibroblast growth factor-receptor activation. May induce both caspase-dependent apoptosis and caspase-independent cell death. Plays a role in the embryonic development. The protein is Dual serine/threonine and tyrosine protein kinase (dstyk) of Danio rerio (Zebrafish).